Reading from the N-terminus, the 82-residue chain is RNA-binding protein GK0100 (82 aa).

This sequence belongs to the eukaryotic ribosomal protein eL8 family.

This is RNA-binding protein GK0100 from Geobacillus kaustophilus (strain HTA426).